The chain runs to 132 residues: Small ribosomal subunit protein uS9 (132 aa).

Residues 100–132 (LKSNGLLTRDDRTKERKKPGLKRARKAPQYTKR) are disordered. The segment covering 114-132 (ERKKPGLKRARKAPQYTKR) has biased composition (basic residues).

This sequence belongs to the universal ribosomal protein uS9 family.

This chain is Small ribosomal subunit protein uS9, found in Dehalococcoides mccartyi (strain ATCC BAA-2266 / KCTC 15142 / 195) (Dehalococcoides ethenogenes (strain 195)).